The following is a 480-amino-acid chain: Aspartyl/glutamyl-tRNA(Asn/Gln) amidotransferase subunit B (480 aa).

The protein belongs to the GatB/GatE family. GatB subfamily. As to quaternary structure, heterotrimer of A, B and C subunits.

It carries out the reaction L-glutamyl-tRNA(Gln) + L-glutamine + ATP + H2O = L-glutaminyl-tRNA(Gln) + L-glutamate + ADP + phosphate + H(+). The enzyme catalyses L-aspartyl-tRNA(Asn) + L-glutamine + ATP + H2O = L-asparaginyl-tRNA(Asn) + L-glutamate + ADP + phosphate + 2 H(+). In terms of biological role, allows the formation of correctly charged Asn-tRNA(Asn) or Gln-tRNA(Gln) through the transamidation of misacylated Asp-tRNA(Asn) or Glu-tRNA(Gln) in organisms which lack either or both of asparaginyl-tRNA or glutaminyl-tRNA synthetases. The reaction takes place in the presence of glutamine and ATP through an activated phospho-Asp-tRNA(Asn) or phospho-Glu-tRNA(Gln). In Streptococcus thermophilus (strain ATCC BAA-250 / LMG 18311), this protein is Aspartyl/glutamyl-tRNA(Asn/Gln) amidotransferase subunit B.